We begin with the raw amino-acid sequence, 209 residues long: MGKFQVLDHPLIQHKLTIIRNKDCGTRSFREVVNEISTLMAYEVSRDMPLQDKTIETPVAKMTAKELAGKKVAIVPILRAGIGMVDGILELIPAAKVGHIGMYRDEETLQPHEYFVKLPSDIGQRQVFVVDPMLATGGSAIMAIDALKKRGASNIKFVCLVSAPEGVKALREKHPDIDIYTAALDDRLNEDGYIVPGLGDAGDRLFGTK.

Residues Arg79, Arg104, and 131 to 139 (DPMLATGGS) each bind 5-phospho-alpha-D-ribose 1-diphosphate. Uracil is bound by residues Ile194 and 199 to 201 (GDA). 5-phospho-alpha-D-ribose 1-diphosphate is bound at residue Asp200.

It belongs to the UPRTase family. Mg(2+) serves as cofactor.

It carries out the reaction UMP + diphosphate = 5-phospho-alpha-D-ribose 1-diphosphate + uracil. The protein operates within pyrimidine metabolism; UMP biosynthesis via salvage pathway; UMP from uracil: step 1/1. With respect to regulation, allosterically activated by GTP. In terms of biological role, catalyzes the conversion of uracil and 5-phospho-alpha-D-ribose 1-diphosphate (PRPP) to UMP and diphosphate. The protein is Uracil phosphoribosyltransferase of Levilactobacillus brevis (strain ATCC 367 / BCRC 12310 / CIP 105137 / JCM 1170 / LMG 11437 / NCIMB 947 / NCTC 947) (Lactobacillus brevis).